The sequence spans 65 residues: Sec-independent protein translocase protein TatA (65 aa).

A helical transmembrane segment spans residues 1–21; sequence MFGLGGQELVLILLIILLLFG.

It belongs to the TatA/E family. As to quaternary structure, forms a complex with TatC.

The protein resides in the cell inner membrane. Part of the twin-arginine translocation (Tat) system that transports large folded proteins containing a characteristic twin-arginine motif in their signal peptide across membranes. TatA could form the protein-conducting channel of the Tat system. This is Sec-independent protein translocase protein TatA from Chlorobium phaeobacteroides (strain DSM 266 / SMG 266 / 2430).